A 631-amino-acid polypeptide reads, in one-letter code: tRNA uridine 5-carboxymethylaminomethyl modification enzyme MnmG (631 aa).

Residue 13–18 (GGGHAG) participates in FAD binding. Residue 273-287 (GPRYCPSIEDKVNRF) participates in NAD(+) binding.

Belongs to the MnmG family. Homodimer. Heterotetramer of two MnmE and two MnmG subunits. It depends on FAD as a cofactor.

It localises to the cytoplasm. NAD-binding protein involved in the addition of a carboxymethylaminomethyl (cmnm) group at the wobble position (U34) of certain tRNAs, forming tRNA-cmnm(5)s(2)U34. The polypeptide is tRNA uridine 5-carboxymethylaminomethyl modification enzyme MnmG (Chromohalobacter salexigens (strain ATCC BAA-138 / DSM 3043 / CIP 106854 / NCIMB 13768 / 1H11)).